A 343-amino-acid polypeptide reads, in one-letter code: Fanconi anemia group F protein (343 aa).

In terms of assembly, belongs to the multisubunit FA complex composed of FANCA, FANCB, FANCC, FANCE, FANCF, FANCG, FANCL/PHF9 and FANCM. In complex with FANCA, FANCG and FANCL, but not with FANCC, nor FANCE, interacts with HES1; this interaction may be essential for the stability and nuclear localization of FA core complex proteins.

It localises to the nucleus. In terms of biological role, DNA repair protein that may operate in a postreplication repair or a cell cycle checkpoint function. May be implicated in interstrand DNA cross-link repair and in the maintenance of normal chromosome stability. The sequence is that of Fanconi anemia group F protein from Mus musculus (Mouse).